We begin with the raw amino-acid sequence, 1074 residues long: Formin-G (1074 aa).

One can recognise a GBD/FH3 domain in the interval 34–423; the sequence is LQMQQGSKTY…DKINEFEKKI (390 aa). Disordered regions lie at residues 476 to 507 and 549 to 639; these read QSIS…DIQS and FTPT…NPSS. Positions 481-503 are enriched in low complexity; it reads SQDSSNNQKASSSSSNTSTLNDS. Positions 502-530 form a coiled coil; the sequence is DSDIQSIQSSLKEATLEIERLKLAIEEKM. A compositionally biased stretch (polar residues) spans 549-561; the sequence is FTPTSPDISNDGQ. Pro residues predominate over residues 568–610; sequence APPPSPSPPPPISGGGAPPPPPPPPPPPSGGGAPPPPPPPPPS. Residues 597-623 enclose the FH1 domain; sequence GGGAPPPPPPPPPSGGKKAGAPGAPPT. One can recognise an FH2 domain in the interval 631–1031; the sequence is NKPVINPSSK…ASGDNGAVQN (401 aa). Positions 914-971 form a coiled coil; the sequence is DINDLEKQFNISKNNCKKVLEANIPSSSKFQSTIGSFLEKTEIDIKNLKENQKNIVDS. A DAD domain is found at 1037-1073; sequence GADPLAALANAIKLGQTGLRKRPGPENSSGGSQLNLN. A disordered region spans residues 1053 to 1074; sequence TGLRKRPGPENSSGGSQLNLNK. Over residues 1062–1074 the composition is skewed to polar residues; that stretch reads ENSSGGSQLNLNK.

It belongs to the formin homology family. Diaphanous subfamily. Interacts (via GBD/FH3 domain) with activated Rho-GTPases.

Functionally, formins play an important role in the nucleation of actin and the formation of linear actin filaments. The sequence is that of Formin-G (forG) from Dictyostelium discoideum (Social amoeba).